The following is a 106-amino-acid chain: Large ribosomal subunit protein eL42 (106 aa).

Belongs to the eukaryotic ribosomal protein eL42 family.

The sequence is that of Large ribosomal subunit protein eL42 (RPL44) from Kluyveromyces lactis (strain ATCC 8585 / CBS 2359 / DSM 70799 / NBRC 1267 / NRRL Y-1140 / WM37) (Yeast).